A 268-amino-acid chain; its full sequence is Undecaprenyl-diphosphatase (268 aa).

A run of 8 helical transmembrane segments spans residues 11–33 (FLGL…LLLI), 46–66 (FEVL…SAKL), 84–104 (LGVL…HGFI), 107–127 (VLFE…FILL), 144–164 (YPLP…IPGV), 185–205 (AEFS…YDLF), 213–233 (FNDG…GVFV), and 246–266 (FALF…ALII).

It belongs to the UppP family.

Its subcellular location is the cell inner membrane. It catalyses the reaction di-trans,octa-cis-undecaprenyl diphosphate + H2O = di-trans,octa-cis-undecaprenyl phosphate + phosphate + H(+). Functionally, catalyzes the dephosphorylation of undecaprenyl diphosphate (UPP). Confers resistance to bacitracin. This chain is Undecaprenyl-diphosphatase, found in Brucella suis (strain ATCC 23445 / NCTC 10510).